Consider the following 232-residue polypeptide: MDLPIQDSHDSSTSPKGKQPTTAEKSATKKEDKVPVKKQKTRTVFSSTQLCVLNDRFQRQKYLSLQQMQELSNILNLSYKQVKTWFQNQRMKSKRWQKNNWLKNSNGVTQGCLVNPTGNLPMWSNQTWNNSTWSNQTQNIQSWSNHSWNTQTWCTQSWNNQAWNSPFYNCGEESLQSCMQFQPNSPASDLQAALEAAGEGLNVIQQTTRYFNTPQTMDLFLNYSMNMQPEDV.

The segment at 1-39 is disordered; that stretch reads MDLPIQDSHDSSTSPKGKQPTTAEKSATKKEDKVPVKKQ. The segment covering 11–25 has biased composition (polar residues); sequence SSTSPKGKQPTTAEK. Positions 26-35 are enriched in basic and acidic residues; sequence SATKKEDKVP. Repeat copies occupy residues 123–127, 128–132, 133–137, 143–147, 148–152, 153–157, 158–162, and 163–167. The tract at residues 123 to 167 is 8 X repeats starting with a Trp in each unit; sequence WSNQTWNNSTWSNQTQNIQSWSNHSWNTQTWCTQSWNNQAWNSPF. The segment at 123–167 is sufficient for transactivation activity; sequence WSNQTWNNSTWSNQTQNIQSWSNHSWNTQTWCTQSWNNQAWNSPF. Residues 168-232 are sufficient for strong transactivation activity; that stretch reads YNCGEESLQS…YSMNMQPEDV (65 aa).

The protein belongs to the Nanog homeobox family.

Its subcellular location is the nucleus. Its function is as follows. Probable transcriptional regulator. In Homo sapiens (Human), this protein is Putative homeobox protein NANOG2 (NANOGP1).